The primary structure comprises 684 residues: Sec1 family domain-containing protein 2 (684 aa).

This sequence belongs to the STXBP/unc-18/SEC1 family.

Its function is as follows. May be involved in protein transport. This Mus musculus (Mouse) protein is Sec1 family domain-containing protein 2 (Scfd2).